The sequence spans 263 residues: 3-oxo-5-alpha-steroid 4-dehydrogenase 1 (263 aa).

5 helical membrane passes run 16–33 (MLAALAYLQCAVGCAVLA), 90–110 (ILLAMFLVHYGHRCLIYPFLM), 115–135 (PMPLLACTMAIMFCTFNGYLQ), 155–175 (FLIGFGLWLAGMLINIHSDHI), and 213–233 (YALASWSVQGAAFAFFTFCFL).

The protein belongs to the steroid 5-alpha reductase family.

The protein localises to the microsome membrane. Its subcellular location is the endoplasmic reticulum membrane. The enzyme catalyses a 3-oxo-5alpha-steroid + NADP(+) = a 3-oxo-Delta(4)-steroid + NADPH + H(+). The catalysed reaction is 5alpha-pregnane-3,20-dione + NADP(+) = progesterone + NADPH + H(+). It catalyses the reaction 17beta-hydroxy-5alpha-androstan-3-one + NADP(+) = testosterone + NADPH + H(+). It carries out the reaction androst-4-ene-3,17-dione + NADPH + H(+) = 5alpha-androstan-3,17-dione + NADP(+). Converts testosterone into 5-alpha-dihydrotestosterone and progesterone or corticosterone into their corresponding 5-alpha-3-oxosteroids. It plays a central role in sexual differentiation and androgen physiology. The protein is 3-oxo-5-alpha-steroid 4-dehydrogenase 1 (SRD5A1) of Macaca fascicularis (Crab-eating macaque).